The chain runs to 161 residues: Nucleotide-binding protein Shal_3198 (161 aa).

Belongs to the YajQ family.

Functionally, nucleotide-binding protein. This Shewanella halifaxensis (strain HAW-EB4) protein is Nucleotide-binding protein Shal_3198.